The primary structure comprises 83 residues: MVVIRLARGGAKKRPFYQIVVTDSRNARDGRFIERIGFFNPTAQGQAEKLRLDADRFAHWVSQGAQPSERVASLAAQAKKATA.

Belongs to the bacterial ribosomal protein bS16 family.

The sequence is that of Small ribosomal subunit protein bS16 from Acinetobacter baumannii (strain AB307-0294).